The sequence spans 376 residues: UDP-N-acetylenolpyruvoylglucosamine reductase (376 aa).

The 172-residue stretch at 48 to 219 folds into the FAD-binding PCMH-type domain; sequence VGGPARHLVI…LDVTMQFNLG (172 aa). Residue Arg196 is part of the active site. The active-site Proton donor is the Ser274. The active site involves Glu368.

Belongs to the MurB family. The cofactor is FAD.

It localises to the cytoplasm. It catalyses the reaction UDP-N-acetyl-alpha-D-muramate + NADP(+) = UDP-N-acetyl-3-O-(1-carboxyvinyl)-alpha-D-glucosamine + NADPH + H(+). Its pathway is cell wall biogenesis; peptidoglycan biosynthesis. In terms of biological role, cell wall formation. This Cutibacterium acnes (strain DSM 16379 / KPA171202) (Propionibacterium acnes) protein is UDP-N-acetylenolpyruvoylglucosamine reductase.